Consider the following 469-residue polypeptide: Programmed cell death protein 4 (469 aa).

The residue at position 1 (Met-1) is an N-acetylmethionine. Disordered regions lie at residues Met-1–Asn-38 and Lys-58–Gly-128. Ser-25 carries the phosphoserine modification. The Nuclear localization signal signature appears at Lys-58–Arg-64. Ser-67 carries the post-translational modification Phosphoserine; by PKB and RPS6KB1. 6 positions are modified to phosphoserine: Ser-68, Ser-71, Ser-76, Ser-78, Ser-80, and Ser-94. The Phosphodegron signature appears at Asp-70 to Ser-76. Residues Gly-74–Asp-83 show a composition bias toward low complexity. Positions Lys-114 to Gly-125 are enriched in gly residues. Tyr-152 is modified (phosphotyrosine). An MI 1 domain is found at Ala-163 to Gly-284. The short motif at Asp-241–Leu-250 is the Nuclear localization signal element. Phosphoserine occurs at positions 313 and 317. The 124-residue stretch at His-326–Ser-449 folds into the MI 2 domain. Ser-457 carries the post-translational modification Phosphoserine; by PKB.

Belongs to the PDCD4 family. As to quaternary structure, interacts (via MI domains) with EIF4A2. Interacts (via MI domains) with EIF4A1 (via N-terminal domain). Heterotrimer with EIF4A1; one molecule of PDCD4 binds two molecules of EIF4A1. Interacts with EIF4G1. May form a complex with EIF4A1 and EIF4G1. The interaction between PDCD4 and EIF4A1 interferes with the interaction between EIF4A1 and EIF4G. When phosphorylated, interacts with BTRC and FBXW11. In terms of processing, polyubiquitinated, leading to its proteasomal degradation. Rapidly degraded in response to mitogens. Phosphorylation of the phosphodegron promotes interaction with BTRC and proteasomal degradation. Post-translationally, phosphorylated at Ser-67 by RPS6KB1 in response to mitogens; phosphorylation promotes proteasomal degradation of PDCD4. Up-regulated in proliferative cells. Highly expressed in epithelial cells of the mammary gland. Reduced expression in lung cancer and colon carcinoma.

It is found in the nucleus. The protein resides in the cytoplasm. Functionally, inhibits translation initiation and cap-dependent translation. May excert its function by hindering the interaction between EIF4A1 and EIF4G. Inhibits the helicase activity of EIF4A. Modulates the activation of JUN kinase. Down-regulates the expression of MAP4K1, thus inhibiting events important in driving invasion, namely, MAPK85 activation and consequent JUN-dependent transcription. May play a role in apoptosis. Tumor suppressor. Inhibits tumor promoter-induced neoplastic transformation. Binds RNA. This chain is Programmed cell death protein 4 (PDCD4), found in Homo sapiens (Human).